The following is a 525-amino-acid chain: Bifunctional purine biosynthesis protein PurH (525 aa).

The MGS-like domain maps to 10–156 (HRIPIRRALV…KNHPSVAIVT (147 aa)).

Belongs to the PurH family.

The enzyme catalyses (6R)-10-formyltetrahydrofolate + 5-amino-1-(5-phospho-beta-D-ribosyl)imidazole-4-carboxamide = 5-formamido-1-(5-phospho-D-ribosyl)imidazole-4-carboxamide + (6S)-5,6,7,8-tetrahydrofolate. The catalysed reaction is IMP + H2O = 5-formamido-1-(5-phospho-D-ribosyl)imidazole-4-carboxamide. It functions in the pathway purine metabolism; IMP biosynthesis via de novo pathway; 5-formamido-1-(5-phospho-D-ribosyl)imidazole-4-carboxamide from 5-amino-1-(5-phospho-D-ribosyl)imidazole-4-carboxamide (10-formyl THF route): step 1/1. Its pathway is purine metabolism; IMP biosynthesis via de novo pathway; IMP from 5-formamido-1-(5-phospho-D-ribosyl)imidazole-4-carboxamide: step 1/1. In Nocardioides sp. (strain ATCC BAA-499 / JS614), this protein is Bifunctional purine biosynthesis protein PurH.